We begin with the raw amino-acid sequence, 158 residues long: 3-hydroxyacyl-[acyl-carrier-protein] dehydratase FabZ (158 aa).

The active site involves His57.

It belongs to the thioester dehydratase family. FabZ subfamily.

The protein resides in the cytoplasm. It catalyses the reaction a (3R)-hydroxyacyl-[ACP] = a (2E)-enoyl-[ACP] + H2O. In terms of biological role, involved in unsaturated fatty acids biosynthesis. Catalyzes the dehydration of short chain beta-hydroxyacyl-ACPs and long chain saturated and unsaturated beta-hydroxyacyl-ACPs. The sequence is that of 3-hydroxyacyl-[acyl-carrier-protein] dehydratase FabZ from Helicobacter acinonychis (strain Sheeba).